We begin with the raw amino-acid sequence, 872 residues long: Alanine--tRNA ligase (872 aa).

Histidine 563, histidine 567, cysteine 665, and histidine 669 together coordinate Zn(2+).

It belongs to the class-II aminoacyl-tRNA synthetase family. Requires Zn(2+) as cofactor.

The protein localises to the cytoplasm. It catalyses the reaction tRNA(Ala) + L-alanine + ATP = L-alanyl-tRNA(Ala) + AMP + diphosphate. Functionally, catalyzes the attachment of alanine to tRNA(Ala) in a two-step reaction: alanine is first activated by ATP to form Ala-AMP and then transferred to the acceptor end of tRNA(Ala). Also edits incorrectly charged Ser-tRNA(Ala) and Gly-tRNA(Ala) via its editing domain. This is Alanine--tRNA ligase from Bacteroides thetaiotaomicron (strain ATCC 29148 / DSM 2079 / JCM 5827 / CCUG 10774 / NCTC 10582 / VPI-5482 / E50).